The following is a 1473-amino-acid chain: Ovostatin (1473 aa).

Residues 1–36 form the signal peptide; sequence MHCFLGREILSFFCLTVRKMWLKFILAILLLHAAAG. 13 N-linked (GlcNAc...) asparagine glycosylation sites follow: asparagine 67, asparagine 82, asparagine 89, asparagine 191, asparagine 342, asparagine 403, asparagine 527, asparagine 588, asparagine 757, asparagine 1141, asparagine 1221, asparagine 1315, and asparagine 1347.

The protein belongs to the protease inhibitor I39 (alpha-2-macroglobulin) family. Homotetramer, which consists of two pairs of disulfide-linked chains. Post-translationally, lacks the thioester bond found in other members of this family. In terms of processing, glycosylated; contains 56 glucosamine units per subunit.

The protein localises to the secreted. Its function is as follows. Is able to inhibit all four classes of proteinases by a unique 'trapping' mechanism. This protein has a peptide stretch, called the 'bait region' which contains specific cleavage sites for different proteinases. When a proteinase cleaves the bait region, a conformational change is induced in the protein which traps the proteinase. The entrapped enzyme remains active against low molecular weight substrates (activity against high molecular weight substrates is greatly reduced). This is Ovostatin from Gallus gallus (Chicken).